The primary structure comprises 872 residues: Alanine--tRNA ligase (872 aa).

The Zn(2+) site is built by His-566, His-570, Cys-668, and His-672.

Belongs to the class-II aminoacyl-tRNA synthetase family. Zn(2+) is required as a cofactor.

The protein resides in the cytoplasm. It carries out the reaction tRNA(Ala) + L-alanine + ATP = L-alanyl-tRNA(Ala) + AMP + diphosphate. Catalyzes the attachment of alanine to tRNA(Ala) in a two-step reaction: alanine is first activated by ATP to form Ala-AMP and then transferred to the acceptor end of tRNA(Ala). Also edits incorrectly charged Ser-tRNA(Ala) and Gly-tRNA(Ala) via its editing domain. In Lactococcus lactis subsp. cremoris (strain MG1363), this protein is Alanine--tRNA ligase.